The following is a 240-amino-acid chain: Large ribosomal subunit protein bL25 (240 aa).

Disordered stretches follow at residues 1–20 and 204–240; these read MAENVLSAQKRTEQGKGPAR and GAAPAAGAAAPAGGAAPAAGAAPAKGGEAKGGDKAKK. Low complexity predominate over residues 204–229; sequence GAAPAAGAAAPAGGAAPAAGAAPAKG. Basic and acidic residues predominate over residues 230–240; it reads GEAKGGDKAKK.

The protein belongs to the bacterial ribosomal protein bL25 family. CTC subfamily. In terms of assembly, part of the 50S ribosomal subunit; part of the 5S rRNA/L5/L18/L25 subcomplex. Contacts the 5S rRNA. Binds to the 5S rRNA independently of L5 and L18.

Functionally, this is one of the proteins that binds to the 5S RNA in the ribosome where it forms part of the central protuberance. This is Large ribosomal subunit protein bL25 from Anaeromyxobacter sp. (strain K).